The sequence spans 745 residues: Catalase-peroxidase (745 aa).

The segment at residues 97-223 (WHSAGTYRTG…LAAVQMGLIY (127 aa)) is a cross-link (tryptophyl-tyrosyl-methioninium (Trp-Tyr) (with M-249)). His98 acts as the Proton acceptor in catalysis. A cross-link (tryptophyl-tyrosyl-methioninium (Tyr-Met) (with W-97)) is located at residues 223–249 (YVNPEGPDGSPDPWASARDIRMTFARM). Heme b is bound at residue His264. The interval 345 to 368 (KQWQPVNPKPEDLAPGAHSPDRRV) is disordered.

It belongs to the peroxidase family. Peroxidase/catalase subfamily. As to quaternary structure, homodimer or homotetramer. Requires heme b as cofactor. In terms of processing, formation of the three residue Trp-Tyr-Met cross-link is important for the catalase, but not the peroxidase activity of the enzyme.

It carries out the reaction H2O2 + AH2 = A + 2 H2O. The enzyme catalyses 2 H2O2 = O2 + 2 H2O. Bifunctional enzyme with both catalase and broad-spectrum peroxidase activity. The protein is Catalase-peroxidase of Phenylobacterium zucineum (strain HLK1).